Here is a 423-residue protein sequence, read N- to C-terminus: Protein CLP1 homolog (423 aa).

ATP contacts are provided by residues glutamate 19, lysine 60, and 122-127 (DVGKTT).

This sequence belongs to the Clp1 family. Clp1 subfamily.

The protein resides in the nucleus. In terms of biological role, required for endonucleolytic cleavage during polyadenylation-dependent pre-mRNA 3'-end formation. This chain is Protein CLP1 homolog (cbc), found in Culex quinquefasciatus (Southern house mosquito).